Consider the following 1492-residue polypeptide: Putative leucine-rich repeat-containing protein DDB_G0290503 (1492 aa).

One can recognise a PH domain in the interval 2–111; that stretch reads SILLEGYLEK…WIEGIKDAIK (110 aa). 21 LRR repeats span residues 123 to 144, 180 to 204, 258 to 284, 329 to 351, 352 to 375, 389 to 413, 439 to 462, 519 to 543, 551 to 575, 579 to 603, 632 to 656, 728 to 752, 806 to 830, 831 to 855, 895 to 919, 927 to 951, 955 to 979, 1013 to 1036, 1044 to 1068, 1138 to 1164, and 1210 to 1232; these read LDGL…IKHL, IKSL…VEKL, QESL…QFEK, KNQF…SIVD, DKLK…EIDN, ISKI…SIDK, LEKL…ILEI, INEL…NQSS, LNQL…IIER, IDQL…NESS, LDEL…NQSS, LKSL…NQDS, INEL…NESS, LIQL…IIER, LNQL…NQSS, NEKL…NESL, FENL…IIDV, LQDL…ELKE, and NAHL…GFNE. The tract at residues 1272-1292 is disordered; sequence RSSSSSLHQQQQMISPDLSNS. Over residues 1274-1286 the composition is skewed to low complexity; that stretch reads SSSSLHQQQQMIS. LRR repeat units lie at residues 1424–1444 and 1445–1468; these read SSEK…KYFF and AIAR…IFDM.

The chain is Putative leucine-rich repeat-containing protein DDB_G0290503 from Dictyostelium discoideum (Social amoeba).